Here is a 319-residue protein sequence, read N- to C-terminus: ATP-dependent 6-phosphofructokinase (319 aa).

G11 is a binding site for ATP. 21 to 25 (RAVVR) contacts ADP. ATP contacts are provided by residues 72-73 (RC) and 102-105 (GEGS). Mg(2+) is bound at residue E103. A substrate-binding site is contributed by 126–128 (TID). D128 acts as the Proton acceptor in catalysis. Position 155 (K155) interacts with ADP. Substrate-binding positions include R163 and 170-172 (MGR). ADP contacts are provided by residues 186–188 (GAE), R212, and 214–216 (KIN). Substrate-binding positions include E223, R244, and 250–253 (HVQR).

Belongs to the phosphofructokinase type A (PFKA) family. ATP-dependent PFK group I subfamily. Prokaryotic clade 'B1' sub-subfamily. Homotetramer. Mg(2+) serves as cofactor.

It is found in the cytoplasm. It carries out the reaction beta-D-fructose 6-phosphate + ATP = beta-D-fructose 1,6-bisphosphate + ADP + H(+). Its pathway is carbohydrate degradation; glycolysis; D-glyceraldehyde 3-phosphate and glycerone phosphate from D-glucose: step 3/4. With respect to regulation, allosterically activated by ADP and other diphosphonucleosides, and allosterically inhibited by phosphoenolpyruvate. Its function is as follows. Catalyzes the phosphorylation of D-fructose 6-phosphate to fructose 1,6-bisphosphate by ATP, the first committing step of glycolysis. This is ATP-dependent 6-phosphofructokinase from Thermotoga petrophila (strain ATCC BAA-488 / DSM 13995 / JCM 10881 / RKU-1).